We begin with the raw amino-acid sequence, 439 residues long: Glutamyl-tRNA reductase (439 aa).

Residues T46–R49, S111, E116–E118, and Q122 each bind substrate. C47 serves as the catalytic Nucleophile. G191 to A196 contacts NADP(+).

This sequence belongs to the glutamyl-tRNA reductase family. Homodimer.

It catalyses the reaction (S)-4-amino-5-oxopentanoate + tRNA(Glu) + NADP(+) = L-glutamyl-tRNA(Glu) + NADPH + H(+). It functions in the pathway porphyrin-containing compound metabolism; protoporphyrin-IX biosynthesis; 5-aminolevulinate from L-glutamyl-tRNA(Glu): step 1/2. Its function is as follows. Catalyzes the NADPH-dependent reduction of glutamyl-tRNA(Glu) to glutamate 1-semialdehyde (GSA). The polypeptide is Glutamyl-tRNA reductase (Clavibacter michiganensis subsp. michiganensis (strain NCPPB 382)).